The primary structure comprises 185 residues: Elongation factor P (185 aa).

It belongs to the elongation factor P family.

It is found in the cytoplasm. The protein operates within protein biosynthesis; polypeptide chain elongation. Involved in peptide bond synthesis. Stimulates efficient translation and peptide-bond synthesis on native or reconstituted 70S ribosomes in vitro. Probably functions indirectly by altering the affinity of the ribosome for aminoacyl-tRNA, thus increasing their reactivity as acceptors for peptidyl transferase. This is Elongation factor P from Anoxybacillus flavithermus (strain DSM 21510 / WK1).